Here is a 340-residue protein sequence, read N- to C-terminus: DnaJ homolog subfamily C member 22 (340 aa).

A TM2 domain is found at 1-50 (MGKSLLAAYGLWALGGPLGLYHIYLGRDSHALLWMLTLGGFGMGWMWDFW). 7 helical membrane-spanning segments follow: residues 5 to 25 (LLAA…HIYL), 30 to 50 (HALL…WDFW), 81 to 101 (FIGQ…GLSF), 105 to 125 (FHMV…ATVG), 135 to 155 (LIAA…MIPI), 186 to 206 (IGLV…LNTS), and 212 to 232 (VAGS…ISAL). The J domain maps to 278–340 (MACKVLGVNF…LMRLRKSKTL (63 aa)).

It is found in the membrane. Its function is as follows. May function as a co-chaperone. The protein is DnaJ homolog subfamily C member 22 (dnajc22) of Xenopus tropicalis (Western clawed frog).